Consider the following 721-residue polypeptide: Penicillin-binding protein activator LpoA (721 aa).

The N-terminal stretch at 1-26 is a signal peptide; it reads MVPLTFLRTKASRSLPIMLAALIFAG. The N-palmitoyl cysteine moiety is linked to residue Cys27. Cys27 carries S-diacylglycerol cysteine lipidation. Over residues 316-330 the composition is skewed to polar residues; the sequence is TSDLTSAQAPAQGTM. The segment at 316-393 is disordered; it reads TSDLTSAQAP…PAAQPQAVAA (78 aa). A compositionally biased stretch (low complexity) spans 331-393; it reads QNPVTAPTTP…PAAQPQAVAA (63 aa).

Belongs to the LpoA family. In terms of assembly, interacts with PBP1a.

The protein localises to the cell outer membrane. In terms of biological role, regulator of peptidoglycan synthesis that is essential for the function of penicillin-binding protein 1A (PBP1a). This Enterobacter sp. (strain 638) protein is Penicillin-binding protein activator LpoA.